The following is a 394-amino-acid chain: Bone morphogenetic protein 2 (394 aa).

The N-terminal stretch at 1–19 (MVAGTRCLLVLLLPQVLLG) is a signal peptide. A propeptide spans 20-280 (GAAGLIPELG…GHPLHKREKR (261 aa)) (cleaved by PCSK5). Phosphoserine is present on serine 86. N-linked (GlcNAc...) asparagine glycans are attached at residues asparagine 134, asparagine 162, and asparagine 198. A disordered region spans residues 269-291 (GKGHPLHKREKRQAKHKQRKRLK). Residues 272–291 (HPLHKREKRQAKHKQRKRLK) show a composition bias toward basic residues. Disulfide bonds link cysteine 294-cysteine 359, cysteine 323-cysteine 391, and cysteine 327-cysteine 393. Residue asparagine 336 is glycosylated (N-linked (GlcNAc...) asparagine).

This sequence belongs to the TGF-beta family. Homodimer; disulfide-linked. Interacts with SOSTDC1. Interacts with GREM2, RGMA, RGMB and RGMC. Interacts with ASPN. Interacts with MAFP5. Interacts with FBN1 (via N-terminal domain) and FBN2. Interacts with type I receptor BMPR1A. Interacts with type II receptor BMPR2. Interacts with SCUBE3. Interacts with TNFAIP6 (primarily via Link domain); this interaction is inhibited by hyaluronan. Interacts with ERFE. Interacts with BMPR1A/ALK3; the interaction may induce HAMP expression. Forms heterodimers with BMP6 in vitro; the heterodimer then binds to its receptor BMPR1A /ALK3 and may induce HAMP expression. Interacts with TGFBR3.

It localises to the secreted. Functionally, growth factor of the TGF-beta superfamily that plays essential roles in many developmental processes, including cardiogenesis, neurogenesis, and osteogenesis. Induces cartilage and bone formation. Initiates the canonical BMP signaling cascade by associating with type I receptor BMPR1A and type II receptor BMPR2. Once all three components are bound together in a complex at the cell surface, BMPR2 phosphorylates and activates BMPR1A. In turn, BMPR1A propagates signal by phosphorylating SMAD1/5/8 that travel to the nucleus and act as activators and repressors of transcription of target genes. Also acts to promote expression of HAMP, via the interaction with its receptor BMPR1A/ALK3. Can also signal through non-canonical pathways such as ERK/MAP kinase signaling cascade that regulates osteoblast differentiation. Also stimulates the differentiation of myoblasts into osteoblasts via the EIF2AK3-EIF2A-ATF4 pathway by stimulating EIF2A phosphorylation which leads to increased expression of ATF4 which plays a central role in osteoblast differentiation. Acts as a positive regulator of odontoblast differentiation during mesenchymal tooth germ formation, expression is repressed during the bell stage by MSX1-mediated inhibition of CTNNB1 signaling. In Mus musculus (Mouse), this protein is Bone morphogenetic protein 2 (Bmp2).